The primary structure comprises 290 residues: Shikimate dehydrogenase (NADP(+)) (290 aa).

Residues Ser20–Ser22 and Thr67 contribute to the shikimate site. Lys71 functions as the Proton acceptor in the catalytic mechanism. Positions 92 and 107 each coordinate shikimate. Residues Gly132 to Ala136 and Met228 contribute to the NADP(+) site. Tyr230 contacts shikimate. Gly251 is a binding site for NADP(+).

It belongs to the shikimate dehydrogenase family. As to quaternary structure, homodimer.

It catalyses the reaction shikimate + NADP(+) = 3-dehydroshikimate + NADPH + H(+). It participates in metabolic intermediate biosynthesis; chorismate biosynthesis; chorismate from D-erythrose 4-phosphate and phosphoenolpyruvate: step 4/7. Its function is as follows. Involved in the biosynthesis of the chorismate, which leads to the biosynthesis of aromatic amino acids. Catalyzes the reversible NADPH linked reduction of 3-dehydroshikimate (DHSA) to yield shikimate (SA). This is Shikimate dehydrogenase (NADP(+)) from Citrifermentans bemidjiense (strain ATCC BAA-1014 / DSM 16622 / JCM 12645 / Bem) (Geobacter bemidjiensis).